We begin with the raw amino-acid sequence, 1036 residues long: Multidrug resistance protein MdtC (1036 aa).

10 helical membrane passes run 12 to 34, 336 to 353, 360 to 382, 431 to 450, 463 to 485, 528 to 547, 853 to 875, 895 to 917, 949 to 971, and 986 to 1008; these read VATTLLSLAITLCGVLGFTLLPV, RALVIAIGLVILVVFLFL, LIPAIAVPVSLIGTFTAMYLCGF, VGFTVLSMSISLVAVFIPLL, FAITLTTSISISLLVSLTLTPMM, WVLLILAGIIALNVWLYINI, LFLILAAIITVYLVLGILYESYI, LELFDTPFSLIALIGIMLLIGIV, LRFRPILMTTLAALFGSLPLVLS, and IVGGLVMSQLLTLYTTPVVYLCF.

This sequence belongs to the resistance-nodulation-cell division (RND) (TC 2.A.6) family. MdtC subfamily. Part of a tripartite efflux system composed of MdtA, MdtB and MdtC. MdtC forms a heteromultimer with MdtB.

Its subcellular location is the cell inner membrane. This Photorhabdus laumondii subsp. laumondii (strain DSM 15139 / CIP 105565 / TT01) (Photorhabdus luminescens subsp. laumondii) protein is Multidrug resistance protein MdtC.